A 656-amino-acid polypeptide reads, in one-letter code: Macrolide export ATP-binding/permease protein MacB (656 aa).

The ABC transporter domain occupies 20–258 (IELAGITRSF…EPDFAPHVDR (239 aa)). ATP is bound at residue 56–63 (GASGSGKS). A run of 4 helical transmembrane segments spans residues 284 to 304 (ALTL…LAIG), 531 to 551 (LTIL…IGVM), 591 to 611 (ALGG…IALF), and 619 to 639 (LLPV…FGYL).

It belongs to the ABC transporter superfamily. Macrolide exporter (TC 3.A.1.122) family. Homodimer.

It is found in the cell inner membrane. In terms of biological role, non-canonical ABC transporter that contains transmembrane domains (TMD), which form a pore in the inner membrane, and an ATP-binding domain (NBD), which is responsible for energy generation. Confers resistance against macrolides. In Azoarcus sp. (strain BH72), this protein is Macrolide export ATP-binding/permease protein MacB.